The sequence spans 104 residues: Large ribosomal subunit protein uL24 (104 aa).

It belongs to the universal ribosomal protein uL24 family. Part of the 50S ribosomal subunit.

Functionally, one of two assembly initiator proteins, it binds directly to the 5'-end of the 23S rRNA, where it nucleates assembly of the 50S subunit. Its function is as follows. One of the proteins that surrounds the polypeptide exit tunnel on the outside of the subunit. In Corynebacterium aurimucosum (strain ATCC 700975 / DSM 44827 / CIP 107346 / CN-1) (Corynebacterium nigricans), this protein is Large ribosomal subunit protein uL24.